Reading from the N-terminus, the 347-residue chain is NADH-quinone oxidoreductase subunit H (347 aa).

9 helical membrane-spanning segments follow: residues 13–33, 50–70, 82–102, 115–135, 161–181, 198–218, 263–283, 286–306, and 321–341; these read IIMIGQSLLLLVCLLVFIAYV, PNVVGPFGLFQSFADLLKFVF, AVFLLAPLVTVLLALSTWAVV, VGILYIFAISSLEVYGIIMGG, IGFVIVTVLLCVGSLNLTDIV, FLDWHWLSLFPMFIIFFISAL, CALTTILFLGGWLPPVDIWIL, VPGIIWFTLKACFVFFMFAMV, and LGWKVFLPLSLAMVVIVAFVL.

This sequence belongs to the complex I subunit 1 family. As to quaternary structure, NDH-1 is composed of 14 different subunits. Subunits NuoA, H, J, K, L, M, N constitute the membrane sector of the complex.

It is found in the cell inner membrane. It catalyses the reaction a quinone + NADH + 5 H(+)(in) = a quinol + NAD(+) + 4 H(+)(out). In terms of biological role, NDH-1 shuttles electrons from NADH, via FMN and iron-sulfur (Fe-S) centers, to quinones in the respiratory chain. The immediate electron acceptor for the enzyme in this species is believed to be ubiquinone. Couples the redox reaction to proton translocation (for every two electrons transferred, four hydrogen ions are translocated across the cytoplasmic membrane), and thus conserves the redox energy in a proton gradient. This subunit may bind ubiquinone. This Rhizobium johnstonii (strain DSM 114642 / LMG 32736 / 3841) (Rhizobium leguminosarum bv. viciae) protein is NADH-quinone oxidoreductase subunit H.